The sequence spans 2219 residues: E3 ubiquitin-protein ligase Ubr3 (2219 aa).

Disordered stretches follow at residues 1 to 48 and 78 to 134; these read MDED…DLSS and AAGA…SALS. Over residues 20-29 the composition is skewed to basic and acidic residues; sequence VREQTHHPPM. The span at 31–42 shows a compositional bias: acidic residues; it reads EDQELDNEDGSS. Positions 114–134 are enriched in low complexity; that stretch reads GPTTTTSSGTAAESGAASALS. The UBR-type zinc finger occupies 222-293; it reads AKCGLVWVPH…AEGFCSDHGI (72 aa). 2 disordered regions span residues 1348–1367 and 1440–1464; these read SFSL…TMDV and QREK…KARE. The span at 1353-1367 shows a compositional bias: acidic residues; that stretch reads DGEDQSSDDDSTMDV. An RING-type; degenerate zinc finger spans residues 1607 to 1643; the sequence is CGHHVHLSCLEAYLKTLYTTQRQPVQDRGEFYCPVCR. Disordered stretches follow at residues 1872–1902 and 1935–1954; these read VGSD…QQQQ and SAAA…HGAS. Residues 1877–1888 are compositionally biased toward low complexity; that stretch reads SAAESQQQESAA.

The protein belongs to the E3 ubiquitin-protein ligase UBR1-like family. Selectively interacts (via UBR-type zinc finger) with the cleaved form of Diap1; this interaction is enhanced by tal. Interacts with tal and Rrp1. Interacts with ovo isoform B (via N-terminus). Interacts with Cad99C (via the cytoplasmic domain). Interacts with ck and Sans. Interacts with cos (via Kinesin motor domain). Post-translationally, in vitro, self-ubiquitination in the presence of E1, E2 and ubiquitin.

It localises to the cytoplasm. The protein localises to the nucleus. The enzyme catalyses S-ubiquitinyl-[E2 ubiquitin-conjugating enzyme]-L-cysteine + [acceptor protein]-L-lysine = [E2 ubiquitin-conjugating enzyme]-L-cysteine + N(6)-ubiquitinyl-[acceptor protein]-L-lysine.. It functions in the pathway protein modification; protein ubiquitination. E3 ubiquitin-protein ligase which is a component of the N-end rule pathway. Recognizes and binds to proteins bearing specific N-terminal residues, leading to their ubiquitination and subsequent degradation. Binds to the E3 ubiquitin-protein ligase Diap1 and enhances its ubiquitination and anti-apoptotic functions. Essential during trichome development for the ubiquitination of the N-terminus of ovo isoform B (svb), converting it from a transcriptional inhibitor to an activator. Positively regulates a hh-signaling pathway which functions in photoreceptor differentiation. Activation of hh up-regulates transcription of Ubr3, which in turn promotes hh signaling by mediating the ubiquitination and degradation of cos. Necessary for auditory transduction: plays a role in Johnston's organ organization by acting in the regulation of zip and ck function in scolopidial apical attachment. Likely to function by acting in a pathway that negatively regulates the ubiquitination of zip, consequently affecting its interaction with ck. May also negatively regulate a component of the SCF (SKP1-CUL1-F-box protein) E3 ubiquitin-protein ligase complex Cul1, which also appears to function in the negative regulation of the zip-ck interaction and scolopidial apical attachment. The protein is E3 ubiquitin-protein ligase Ubr3 of Drosophila melanogaster (Fruit fly).